The chain runs to 130 residues: Protein NrdI (130 aa).

Belongs to the NrdI family.

Functionally, probably involved in ribonucleotide reductase function. This Bartonella bacilliformis (strain ATCC 35685 / KC583 / Herrer 020/F12,63) protein is Protein NrdI.